We begin with the raw amino-acid sequence, 533 residues long: E3 ubiquitin-protein ligase MGRN1 (533 aa).

The N-myristoyl glycine moiety is linked to residue glycine 2. The segment at glutamate 278–cysteine 317 adopts an RING-type zinc-finger fold. The Required for TSG101-binding motif lies at proline 385–proline 388. A Phosphotyrosine modification is found at tyrosine 390. The segment at glutamine 421 to leucine 519 is disordered. Over residues glycine 423 to serine 439 the composition is skewed to polar residues. 3 positions are modified to phosphoserine: serine 429, serine 450, and serine 502. The span at glutamate 443–glutamate 454 shows a compositional bias: acidic residues.

Interacts with MC1R and MC4R. Interacts with TSG101. Interacts with mislocalized cytosolically exposed PRNP; this interaction alters MGRN1 subcellular location and causes lysosomal enlargement. Autoubiquitinated in vitro.

The protein resides in the cytoplasm. It localises to the cytosol. Its subcellular location is the cell membrane. It is found in the early endosome. It carries out the reaction S-ubiquitinyl-[E2 ubiquitin-conjugating enzyme]-L-cysteine + [acceptor protein]-L-lysine = [E2 ubiquitin-conjugating enzyme]-L-cysteine + N(6)-ubiquitinyl-[acceptor protein]-L-lysine.. It participates in protein modification; protein ubiquitination. Functionally, E3 ubiquitin-protein ligase. Mediates TSG101 monoubiquitination at multiple sites. Plays a role in the regulation of endosome-to-lysosome trafficking. Impairs MC1R- and MC4R-signaling by competing with GNAS-binding to MCRs and inhibiting agonist-induced cAMP production. Does not inhibit ADRB2-signaling. Does not promote MC1R ubiquitination. Also acts as a negative regulator of hedgehog signaling. The chain is E3 ubiquitin-protein ligase MGRN1 (Mgrn1) from Rattus norvegicus (Rat).